Here is a 181-residue protein sequence, read N- to C-terminus: Trans-acting factor D (181 aa).

Functionally, plays a role in 2-micron plasmid partitioning. Antagonizes transcriptional repression of recombinase FLP by REP1-REP2. Regulates both stability and copy number of the plasmid by blocking the formation of the REP1-REP2 repressor complex. The polypeptide is Trans-acting factor D (Saccharomyces cerevisiae (strain ATCC 204508 / S288c) (Baker's yeast)).